We begin with the raw amino-acid sequence, 154 residues long: uncharacterized protein (154 aa).

Disordered stretches follow at residues 23-63 and 79-154; these read ERVG…VVLK and IKAA…DENE. Acidic residues predominate over residues 43–56; the sequence is PDEDGDHSDKEDEQ. At serine 50 the chain carries Phosphoserine. An N6-acetyllysine modification is found at lysine 108. Position 146 is a phosphoserine (serine 146).

This is an uncharacterized protein from Homo sapiens (Human).